Consider the following 323-residue polypeptide: Muscleblind-like protein 3 (323 aa).

C3H1-type zinc fingers lie at residues 13–41, 47–73, 177–205, and 213–239; these read WLTL…HPSR, NGRV…HPPP, TDKL…HPLE, and ENSV…HPPA.

It belongs to the muscleblind family. As to expression, expressed in fast and slow myotomal muscle, heart, liver, skin, brain and testis.

It is found in the nucleus. The protein localises to the cytoplasm. Its function is as follows. Involved in pre-mRNA alternative splicing regulation. Could inhibit terminal muscle differentiation, acting at approximately the time of myogenin induction. This is Muscleblind-like protein 3 (mbnl3) from Takifugu rubripes (Japanese pufferfish).